The following is a 713-amino-acid chain: Polyribonucleotide nucleotidyltransferase (713 aa).

Residues D485 and D491 each contribute to the Mg(2+) site. Positions 552 to 611 constitute a KH domain; that stretch reads PRIHTIKINPEKIKDVIGKGGSVIRALTEETGTNIELDDDGTVRISAVANEAAMEAIRRI. In terms of domain architecture, S1 motif spans 621–689; it reads NRIYEGKVVR…RQGRVRLSIK (69 aa).

Belongs to the polyribonucleotide nucleotidyltransferase family. As to quaternary structure, component of the RNA degradosome, which is a multiprotein complex involved in RNA processing and mRNA degradation. Mg(2+) serves as cofactor.

It localises to the cytoplasm. The enzyme catalyses RNA(n+1) + phosphate = RNA(n) + a ribonucleoside 5'-diphosphate. Functionally, involved in mRNA degradation. Catalyzes the phosphorolysis of single-stranded polyribonucleotides processively in the 3'- to 5'-direction. The protein is Polyribonucleotide nucleotidyltransferase of Aeromonas salmonicida (strain A449).